A 1181-amino-acid polypeptide reads, in one-letter code: Putative type II restriction enzyme and methyltransferase RM.MjaORFECS2P (1181 aa).

It in the C-terminal section; belongs to the N(4)/N(6)-methyltransferase family.

The enzyme catalyses Endonucleolytic cleavage of DNA to give specific double-stranded fragments with terminal 5'-phosphates.. It carries out the reaction a 2'-deoxyadenosine in DNA + S-adenosyl-L-methionine = an N(6)-methyl-2'-deoxyadenosine in DNA + S-adenosyl-L-homocysteine + H(+). Its function is as follows. Probably a G subtype restriction enzyme that recognizes an undetermined sequence and cleaves at an undetermined site. Probably also acts as an alpha subtype methylase, presumably on the same sequence. The sequence is that of Putative type II restriction enzyme and methyltransferase RM.MjaORFECS2P from Methanocaldococcus jannaschii (strain ATCC 43067 / DSM 2661 / JAL-1 / JCM 10045 / NBRC 100440) (Methanococcus jannaschii).